The chain runs to 110 residues: UPF0145 protein MTH_507 (110 aa).

Belongs to the UPF0145 family.

This chain is UPF0145 protein MTH_507, found in Methanothermobacter thermautotrophicus (strain ATCC 29096 / DSM 1053 / JCM 10044 / NBRC 100330 / Delta H) (Methanobacterium thermoautotrophicum).